Consider the following 812-residue polypeptide: Lon protease (812 aa).

The Lon N-terminal domain maps to 22-215 (YAVLPLRDIV…KALSFMEAEI (194 aa)). 367 to 374 (GPPGVGKT) serves as a coordination point for ATP. Residues 602–783 (EDQVGVVTGL…GEVLKHALVR (182 aa)) enclose the Lon proteolytic domain. Residues serine 689 and lysine 732 contribute to the active site. Positions 787 to 812 (PIEWTEQENPTAVPPVEDEAGASLAH) are disordered.

It belongs to the peptidase S16 family. Homohexamer. Organized in a ring with a central cavity.

The protein localises to the cytoplasm. The catalysed reaction is Hydrolysis of proteins in presence of ATP.. Its function is as follows. ATP-dependent serine protease that mediates the selective degradation of mutant and abnormal proteins as well as certain short-lived regulatory proteins. Required for cellular homeostasis and for survival from DNA damage and developmental changes induced by stress. Degrades polypeptides processively to yield small peptide fragments that are 5 to 10 amino acids long. Binds to DNA in a double-stranded, site-specific manner. The chain is Lon protease from Brucella melitensis biotype 1 (strain ATCC 23456 / CCUG 17765 / NCTC 10094 / 16M).